A 174-amino-acid polypeptide reads, in one-letter code: MENMLGLLRLHVIRGVNLAIRDSQSSDPYVIVRMGKQKLRTRVMKKNLNTEWNEDLTLSVTDPTLPVKIMVYDRDRFSRDDKMGDAIFHIDPFLEAIRIQNQLGGLPEGTVIMKIQASRQNCLSEESKIVWHKGKIVQNMFLKLQNVERGEIELQLEWIDVSGALTDDAEDVAF.

N-acetylmethionine is present on methionine 1. Residues 1–104 (MENMLGLLRL…EAIRIQNQLG (104 aa)) form the C2 domain. 7 residues coordinate Ca(2+): arginine 21, aspartate 22, aspartate 27, aspartate 73, arginine 74, aspartate 75, and aspartate 81.

This sequence belongs to the plant CAR protein family. As to quaternary structure, binds to PYR/PYL/RCAR abscisic acid intracellular receptors in an ABA-independent manner, both at the plasma membrane and in the nucleus. Ca(2+) serves as cofactor.

It localises to the cell membrane. It is found in the nucleus. In terms of biological role, stimulates the GTPase/ATPase activities of Obg-like ATPases. Mediates the transient calcium-dependent interaction of PYR/PYL/RCAR abscisic acid (ABA) receptors with the plasma membrane and thus regulates ABA sensitivity. In Arabidopsis thaliana (Mouse-ear cress), this protein is Protein C2-DOMAIN ABA-RELATED 2.